An 810-amino-acid chain; its full sequence is Volume-regulated anion channel subunit LRRC8A (810 aa).

At Met-1 the chain carries N-acetylmethionine. Residues 1–22 lie on the Cytoplasmic side of the membrane; that stretch reads MIPVTELRYFADTQPAYRILKP. The helical transmembrane segment at 23 to 47 threads the bilayer; it reads WWDVFTDYISIVMLMIAVFGGTLQV. Over 48 to 123 the chain is Extracellular; the sequence is TQDKMICLPC…YENRLHWFAK (76 aa). 3 cysteine pairs are disulfide-bonded: Cys-54–Cys-310, Cys-57–Cys-65, and Cys-113–Cys-295. N-linked (GlcNAc...) asparagine glycosylation is found at Asn-66 and Asn-83. A helical transmembrane segment spans residues 124-142; that stretch reads YFPYLVLLHTLIFLACSNF. The Cytoplasmic portion of the chain corresponds to 143-264; the sequence is WFKFPRTSSK…EEGDIVYRLY (122 aa). Thr-200 is modified (phosphothreonine). Ser-202 is subject to Phosphoserine. A Phosphothreonine modification is found at Thr-215. Ser-217 carries the post-translational modification Phosphoserine. Residues 265–286 traverse the membrane as a helical segment; sequence MRQTIIKVIKFFLIICYTVYYV. Residues 287-316 lie on the Extracellular side of the membrane; sequence HNIKFDVDCTVDIESLTGYRTYRCAHPLAT. Residues 317–341 form a helical membrane-spanning segment; sequence LFKILASFYISLVIFYGLICMYTLW. The Cytoplasmic segment spans residues 342-810; sequence WMLRRSLKKY…RLWRADKEQA (469 aa). LRR repeat units follow at residues 399–422, 423–445, 447–468, 469–492, 493–515, 518–542, 543–565, 567–589, 590–613, 614–637, 639–661, 662–684, 686–707, 708–730, 732–753, 754–776, and 778–801; these read ENKL…RLTK, NAQD…VFDL, ELEV…IAQL, TGLK…AFLR, ENLR…IYSL, LEEL…GLRE, LKRL…VTDV, VHLQ…SLKK, MVNL…IFSL, HNLQ…SFQH, HRLT…IGNL, TNLE…LFYC, KLRY…IGLL, QNLQ…LFQC, KLRA…VGEL, TNLT…LGEC, and LLKR…VKER. The short motif at 706-707 is the Di-leucine motif element; sequence LL.

It belongs to the LRRC8 family. In terms of assembly, heterohexamer; oligomerizes with other LRRC8 proteins (LRRC8B, LRRC8C, LRRC8D and/or LRRC8E) to form a heterohexamer. Can form homohexamers in vitro, but these have lower conductance than heterohexamers. Detected in a channel complex that contains LRRC8A, LRRC8C and LRRC8E. In vivo, the subunit composition may depend primarily on expression levels, and heterooligomeric channels containing various proportions of the different LRRC8 proteins may coexist. Interact with GRB2. Interacts with NOX4; this interaction prevents the ubiquitin-mediated degradation of LRRC8A. Post-translationally, N-glycosylated.

The protein localises to the cell membrane. It is found in the lysosome membrane. It catalyses the reaction chloride(in) = chloride(out). The enzyme catalyses iodide(out) = iodide(in). The catalysed reaction is taurine(out) = taurine(in). It carries out the reaction L-aspartate(out) = L-aspartate(in). It catalyses the reaction L-glutamate(out) = L-glutamate(in). The enzyme catalyses myo-inositol(out) = myo-inositol(in). The catalysed reaction is 2',3'-cGAMP(out) = 2',3'-cGAMP(in). Its activity is regulated as follows. Inhibited by (4-[(2-butyl-6,7-dichloro-2-cyclopentyl-2,3-dihydro-1-oxo-1H-inden-5-yl)oxy]butanoic acid), which plugs the channel like a cork in a bottle by binding in the extracellular selectivity filter and sterically occluding ion conduction. Lipids may block conduction in closed heterohexameric channels. Essential component of the volume-regulated anion channel (VRAC, also named VSOAC channel), an anion channel required to maintain a constant cell volume in response to extracellular or intracellular osmotic changes. The VRAC channel conducts iodide better than chloride and can also conduct organic osmolytes like taurine. Mediates efflux of amino acids, such as aspartate and glutamate, in response to osmotic stress. In complex with LRRC8C or LRRC8E, acts as a transporter of immunoreactive cyclic dinucleotide GMP-AMP (2'-3'-cGAMP), an immune messenger produced in response to DNA virus in the cytosol: mediates both import and export of 2'-3'-cGAMP, thereby promoting transfer of 2'-3'-cGAMP to bystander cells. In contrast, complexes containing LRRC8D inhibit transport of 2'-3'-cGAMP. Required for in vivo channel activity, together with at least one other family member (LRRC8B, LRRC8C, LRRC8D or LRRC8E); channel characteristics depend on the precise subunit composition. Can form functional channels by itself (in vitro). Involved in B-cell development: required for the pro-B cell to pre-B cell transition. Also required for T-cell development. Required for myoblast differentiation: VRAC activity promotes membrane hyperpolarization and regulates insulin-stimulated glucose metabolism and oxygen consumption. Also acts as a regulator of glucose-sensing in pancreatic beta cells: VRAC currents, generated in response to hypotonicity- or glucose-induced beta cell swelling, depolarize cells, thereby causing electrical excitation, leading to increase glucose sensitivity and insulin secretion. Also plays a role in lysosome homeostasis by forming functional lysosomal VRAC channels in response to low cytoplasmic ionic strength condition: lysosomal VRAC channels are necessary for the formation of large lysosome-derived vacuoles, which store and then expel excess water to maintain cytosolic water homeostasis. Acts as a key factor in NLRP3 inflammasome activation by modulating itaconate efflux and mitochondria function. This chain is Volume-regulated anion channel subunit LRRC8A, found in Rattus norvegicus (Rat).